The chain runs to 570 residues: Sulfite reductase [NADPH] hemoprotein beta-component (570 aa).

[4Fe-4S] cluster is bound by residues cysteine 434, cysteine 440, cysteine 479, and cysteine 483. Cysteine 483 lines the siroheme pocket.

This sequence belongs to the nitrite and sulfite reductase 4Fe-4S domain family. Alpha(8)-beta(8). The alpha component is a flavoprotein, the beta component is a hemoprotein. Requires siroheme as cofactor. [4Fe-4S] cluster serves as cofactor.

The catalysed reaction is hydrogen sulfide + 3 NADP(+) + 3 H2O = sulfite + 3 NADPH + 4 H(+). It participates in sulfur metabolism; hydrogen sulfide biosynthesis; hydrogen sulfide from sulfite (NADPH route): step 1/1. Component of the sulfite reductase complex that catalyzes the 6-electron reduction of sulfite to sulfide. This is one of several activities required for the biosynthesis of L-cysteine from sulfate. In Cronobacter sakazakii (strain ATCC BAA-894) (Enterobacter sakazakii), this protein is Sulfite reductase [NADPH] hemoprotein beta-component.